The sequence spans 571 residues: Potassium-transporting ATPase potassium-binding subunit (571 aa).

Helical transmembrane passes span 7–27 (LQFA…GGYL), 66–86 (TYAL…YGIA), 137–157 (GLAV…AALI), 188–208 (FVVA…GFIV), 255–275 (IGNF…CFAF), 286–306 (WAVL…AMSF), 390–410 (VGLN…GLMV), 430–450 (TLYI…SVLI), 497–517 (IGVA…AIAG), and 538–558 (LFVG…FFPA).

The protein belongs to the KdpA family. In terms of assembly, the system is composed of three essential subunits: KdpA, KdpB and KdpC.

It is found in the cell membrane. In terms of biological role, part of the high-affinity ATP-driven potassium transport (or Kdp) system, which catalyzes the hydrolysis of ATP coupled with the electrogenic transport of potassium into the cytoplasm. This subunit binds the extracellular potassium ions and delivers the ions to the membrane domain of KdpB through an intramembrane tunnel. The sequence is that of Potassium-transporting ATPase potassium-binding subunit from Mycobacterium bovis (strain ATCC BAA-935 / AF2122/97).